The following is a 376-amino-acid chain: MREWKIIDSTLREGEQFEKANFSTQDKVEIAKALDEFGIEYIEVTTPVASPQSRKDAEVLASLGLKAKVVTHIQCRLDAAKVAVETGVQGIDLLFGTSKYLRAAHGRDIPRIIEEAKEVIAYIREAAPHVEVRFSAEDTFRSEEQDLLAVYEAVAPYVDRVGLADTVGVATPRQVYALVREVRRVVGPRVDIEFHGHNDTGCAIANAYEAIEAGATHVDTTILGIGERNGITPLGGFLARMYTLQPEYVRRKYKLEMLPELDRMVARMVGVEIPFNNYITGETAFSHKAGMHLKAIYINPEAYEPYPPEVFGVKRKLIIASRLTGRHAIKARAEELGLHYGEEELHRVTQHIKALADRGQLTLEELDRILREWITA.

One can recognise a Pyruvate carboxyltransferase domain in the interval 4–259 (WKIIDSTLRE…RRKYKLEMLP (256 aa)). 2-oxoglutarate is bound at residue Arg12. Glu13 contributes to the Mg(2+) binding site. Residue His72 coordinates 2-oxoglutarate. Residue Asp92 coordinates L-lysine. A 2-oxoglutarate-binding site is contributed by Arg133. 2 residues coordinate L-lysine: Ser135 and Thr166. A 2-oxoglutarate-binding site is contributed by Thr166. Positions 195 and 197 each coordinate Mg(2+). Catalysis depends on His292, which acts as the Proton acceptor.

Belongs to the alpha-IPM synthase/homocitrate synthase family. Homocitrate synthase LYS20/LYS21 subfamily. In terms of assembly, exists in an equilibrium between monomer and homodimer. Mg(2+) serves as cofactor. Mn(2+) is required as a cofactor.

The protein resides in the cytoplasm. The catalysed reaction is acetyl-CoA + 2-oxoglutarate + H2O = (2R)-homocitrate + CoA + H(+). The enzyme catalyses oxaloacetate + acetyl-CoA + H2O = citrate + CoA + H(+). The protein operates within amino-acid biosynthesis; L-lysine biosynthesis via AAA pathway; L-alpha-aminoadipate from 2-oxoglutarate: step 1/5. With respect to regulation, is highly and competitively inhibited by lysine that binds to the active site and competes with 2-oxoglutarate. Is also slightly inhibited by arginine and 2-aminoethylcysteine. In terms of biological role, catalyzes the aldol-type condensation of 2-oxoglutarate with acetyl-CoA to yield homocitrate. Carries out the first step of the alpha-aminoadipate (AAA) lysine biosynthesis pathway. To a lesser extent, can also use oxaloacetate in place of 2-oxoglutarate, leading to citrate. Does not display 2-isopropylmalate synthase activity since it cannot use 2-oxoisovalerate. This is Homocitrate synthase from Thermus thermophilus (strain ATCC BAA-163 / DSM 7039 / HB27).